We begin with the raw amino-acid sequence, 181 residues long: Segregation and condensation protein B (181 aa).

It belongs to the ScpB family. In terms of assembly, homodimer. Homodimerization may be required to stabilize the binding of ScpA to the Smc head domains. Component of a cohesin-like complex composed of ScpA, ScpB and the Smc homodimer, in which ScpA and ScpB bind to the head domain of Smc. The presence of the three proteins is required for the association of the complex with DNA.

It localises to the cytoplasm. Participates in chromosomal partition during cell division. May act via the formation of a condensin-like complex containing Smc and ScpA that pull DNA away from mid-cell into both cell halves. The chain is Segregation and condensation protein B from Desulforamulus reducens (strain ATCC BAA-1160 / DSM 100696 / MI-1) (Desulfotomaculum reducens).